The chain runs to 582 residues: Insulin-like growth factor 2 mRNA-binding protein 3 (582 aa).

2 RRM domains span residues 2–75 (NKLY…HSVP) and 81–156 (CKLQ…YIPD). The tract at residues 164 to 190 (PAVGGRRGFNPRGPPRQGSPSLGARPK) is disordered. S182 carries the post-translational modification Phosphoserine. 4 consecutive KH domains span residues 194 to 259 (DVPL…CRNI), 275 to 342 (EIPL…EEEI), 408 to 473 (SETV…QGRI), and 490 to 556 (KLEA…QRKI). The segment at 562-582 (QVRRQQQPKPSAAGPPVARRK) is disordered.

It belongs to the RRM IMP/VICKZ family. In terms of assembly, homodimer and multimer.

It is found in the cytoplasm. Its subcellular location is the nucleus. The protein resides in the P-body. It localises to the stress granule. Functionally, RNA-binding factor that may recruit target transcripts to cytoplasmic protein-RNA complexes (mRNPs). This transcript 'caging' into mRNPs allows mRNA transport and transient storage. It also modulates the rate and location at which target transcripts encounter the translational apparatus and shields them from endonuclease attacks or microRNA-mediated degradation. Preferentially binds to N6-methyladenosine (m6A)-containing mRNAs and increases their stability. Involved in neuronal crest migration. The polypeptide is Insulin-like growth factor 2 mRNA-binding protein 3 (igf2bp3) (Danio rerio (Zebrafish)).